Reading from the N-terminus, the 270-residue chain is Splicing factor YJU2 (270 aa).

The segment at 1–32 is disordered; it reads MSERKVLNKYIPPDYDPSIRPPKKKKKFQGPN. Zn(2+) contacts are provided by cysteine 48, cysteine 51, cysteine 84, and cysteine 87. A disordered region spans residues 251-270; sequence PNFQPPKYAKRKMEKKKVLV. Over residues 258 to 270 the composition is skewed to basic residues; the sequence is YAKRKMEKKKVLV.

Belongs to the CWC16 family. YJU2 subfamily. In terms of assembly, component of the spliceosome. Present in the activated B complex, the catalytically activated B* complex which catalyzes the branching, the catalytic step 1 C complex catalyzing the exon ligation, and the postcatalytic P complex containing the ligated exons (mRNA) and the excised lariat intron. Belongs to the 40S cdc5-associated complex (or cwf complex), a spliceosome sub-complex reminiscent of a late-stage spliceosome composed of the U2, U5 and U6 snRNAs and at least brr2, cdc5, cwf2/prp3, cwf3/syf1, cwf4/syf3, cwf5/ecm2, spp42/cwf6, cwf7/spf27, cwf8, cwf9, cwf10, cwf11, cwf12, prp45/cwf13, cwf14, cwf15, cwf16, cwf17, cwf18, cwf19, cwf20, cwf21, cwf22, cwf23, cwf24, cwf25, cwf26, cyp7/cwf27, cwf28, cwf29/ist3, lea1, msl1, prp5/cwf1, prp10, prp12/sap130, prp17, prp22, sap61, sap62, sap114, sap145, slu7, smb1, smd1, smd3, smf1, smg1 and syf2.

It is found in the nucleus. Part of the spliceosome which catalyzes two sequential transesterification reactions, first the excision of the non-coding intron from pre-mRNA and then the ligation of the coding exons to form the mature mRNA. Plays a role in stabilizing the structure of the spliceosome catalytic core and docking of the branch helix into the active site, producing 5'-exon and lariat intron-3'-intermediates. In Schizosaccharomyces pombe (strain 972 / ATCC 24843) (Fission yeast), this protein is Splicing factor YJU2 (cwf16).